The primary structure comprises 413 residues: Protein cycle (413 aa).

Positions 1–43 are disordered; that stretch reads MEVQEFCENMEEIEDENYDEEKSARTSDENRKQNHSEIEKRRR. Acidic residues predominate over residues 8–19; it reads ENMEEIEDENYD. Over residues 20 to 41 the composition is skewed to basic and acidic residues; it reads EEKSARTSDENRKQNHSEIEKR. Residues 30 to 83 enclose the bHLH domain; that stretch reads NRKQNHSEIEKRRRDKMNTYINELSSMIPMCFAMQRKLDKLTVLRMAVQHLRGI. The 72-residue stretch at 104–175 folds into the PAS 1 domain; sequence DQELKMIILQ…EQLSSLEQCP (72 aa). The interval 219-242 is disordered; the sequence is NQIKEESDTSSSSRSSTKRKSRLT. Residues 297–367 form the PAS 2 domain; that stretch reads PASLDNHPNI…ESHKMVMQVP (71 aa). The region spanning 372 to 413 is the PAC domain; the sequence is TQVYRFRCKDNSYIQLQSEWRAFKNPWTSEIDYIIAKNSVFL.

In terms of assembly, efficient DNA binding requires dimerization with another bHLH protein. Forms a heterodimer with Clock in order to activate PER and TIM transcription. Expressed in head and ovary.

It localises to the nucleus. Its function is as follows. Putative transcription factor involved in the generation of biological rhythms. Activates cycling transcription of Period (PER) and Timeless (TIM) by binding to the E-box (5'-CACGTG-3') present in their promoters. This chain is Protein cycle (cyc), found in Drosophila melanogaster (Fruit fly).